The following is a 195-amino-acid chain: Probable molybdenum cofactor guanylyltransferase (195 aa).

GTP is bound by residues 6-8 (LAG), Lys18, Asp67, and Asp93. Mg(2+) is bound at residue Asp93.

It belongs to the MobA family. It depends on Mg(2+) as a cofactor.

It is found in the cytoplasm. The enzyme catalyses Mo-molybdopterin + GTP + H(+) = Mo-molybdopterin guanine dinucleotide + diphosphate. Functionally, transfers a GMP moiety from GTP to Mo-molybdopterin (Mo-MPT) cofactor (Moco or molybdenum cofactor) to form Mo-molybdopterin guanine dinucleotide (Mo-MGD) cofactor. This chain is Probable molybdenum cofactor guanylyltransferase, found in Thermococcus sibiricus (strain DSM 12597 / MM 739).